Here is a 629-residue protein sequence, read N- to C-terminus: Neuronal acetylcholine receptor subunit alpha-4 (629 aa).

A signal peptide spans 1–30 (MEIGGSGAPPPLLLLPLLLLLGTGLLPASS). At 32–249 (IETRAHAEER…IIRRLPLFYT (218 aa)) the chain is on the extracellular side. Asn-59 carries an N-linked (GlcNAc...) asparagine glycan. Ca(2+) contacts are provided by Val-78 and Glu-80. N-linked (GlcNAc...) asparagine glycosylation is found at Asn-109 and Asn-176. 2 disulfide bridges follow: Cys-163–Cys-177 and Cys-227–Cys-228. A helical membrane pass occupies residues 250 to 270 (INLIIPCLLISCLTVLVFYLP). A lipid anchor (S-palmitoyl cysteine) is attached at Cys-273. 2 consecutive transmembrane segments (helical) span residues 279–299 (LCISVLLSLTVFLLLITEIIP) and 312–332 (LLFTMIFVTLSIVITVFVLNV). The Cytoplasmic segment spans residues 333–603 (HHRSPRTHTM…KYVAMVIDRI (271 aa)). Disordered stretches follow at residues 420–459 (ETQPTCRSPSHKVPDLKTSEVEKASPCPSPGSCHPPNSSG) and 503–529 (SLTESKPTGSPASLKTRPSQLPVSDQT). Phosphoserine is present on Ser-427. Over residues 431–442 (KVPDLKTSEVEK) the composition is skewed to basic and acidic residues. Residues 449-459 (PGSCHPPNSSG) show a composition bias toward low complexity. A compositionally biased stretch (polar residues) spans 504 to 529 (LTESKPTGSPASLKTRPSQLPVSDQT). A phosphoserine mark is found at Ser-540 and Ser-543. Residues 604-624 (FLWMFIIVCLLGTVGLFLPPW) form a helical membrane-spanning segment.

This sequence belongs to the ligand-gated ion channel (TC 1.A.9) family. Acetylcholine receptor (TC 1.A.9.1) subfamily. Alpha-4/CHRNA4 sub-subfamily. In terms of assembly, neuronal AChR is composed of two different types of subunits: alpha and beta. CHRNA4 forms heteropentameric neuronal acetylcholine receptors with CHRNB2 and CHRNB4, as well as CHRNA5 and CHRNB3 as accesory subunits. Found in two major stoichiometric forms, LS (low agonist sensitivity): (CHRNA4)3:(CHRNB2)2 and HS (high agonist sensitivity): (CHRNA4)2:(CHRNB2)3, the two stoichiometric forms differ in their unitary conductance, calcium permeability, ACh sensitivity and potentiation by divalent cation. Cells produce predominantly an (CHRNA4)3:(CHRNB2)2 nAChR. The (CHRNA4)2:(CHRNB2)3 expression is selectively up-regulated by nicotine and has lower single channel conductance and calcium permeability. In the striatum, also forms CHRNA4:CHRNA6:CHRNB2 complexes. Also found in the stoichiometric form: (CHRNA4:CHRNB2)2:CHRNB3. Interacts with RIC3; which is required for proper folding and assembly. Interacts with LYPD6.

It is found in the synaptic cell membrane. The protein localises to the cell membrane. It catalyses the reaction K(+)(in) = K(+)(out). The enzyme catalyses Na(+)(in) = Na(+)(out). The catalysed reaction is Ca(2+)(in) = Ca(2+)(out). Its activity is regulated as follows. Activated by a myriad of ligands such as acetylcholine, cytisine, nicotine, choline and epibatidine. Channel potentiation by calcium is stoichiometry-selective, CHRNA4:CHRNB2 nACh receptor is achieved by calcium association with topographically distinct sites framed by anionic residues within the CHRNA4 subunit and between the CHRNA4 and CHRNB2 subunits. nAChR activity is inhibited by the antagonist alpha-conotoxins BuIA, PnIA, GID and MII, small disulfide-constrained peptides from cone snails. Its function is as follows. Component of neuronal acetylcholine receptors (nAChRs) that function as pentameric, ligand-gated cation channels with high calcium permeability among other activities. nAChRs are excitatory neurotrasnmitter receptors formed by a collection of nAChR subunits known to mediate synaptic transmission in the nervous system and the neuromuscular junction. Each nAchR subunit confers differential attributes to channel properties, including activation, deactivation and desensitization kinetics, pH sensitivity, cation permeability, and binding to allosteric modulators. CHRNA4 forms heteropentameric neuronal acetylcholine receptors with CHRNB2 and CHRNB4, as well as CHRNA5 and CHRNB3 as accesory subunits. Is the most abundant nAChR subtype expressed in the central nervous system. Found in two major stoichiometric forms,(CHRNA4)3:(CHRNB2)2 and (CHRNA4)2:(CHRNB2)3, the two stoichiometric forms differ in their unitary conductance, calcium permeability, ACh sensitivity and potentiation by divalent cation. Involved in the modulation of calcium-dependent signaling pathways, influences the release of neurotransmitters, including dopamine, glutamate and GABA. This is Neuronal acetylcholine receptor subunit alpha-4 (Chrna4) from Mus musculus (Mouse).